Consider the following 319-residue polypeptide: Structure-specific endonuclease subunit SLX1 (319 aa).

The GIY-YIG domain maps to 20–103 (TFYCCYLLQS…QHGYKTHYIP (84 aa)). An SLX1-type zinc finger spans residues 233–297 (CNLCGQCYDY…LPNFCMCPGC (65 aa)).

This sequence belongs to the SLX1 family. As to quaternary structure, forms a heterodimer with SLX4. Requires a divalent metal cation as cofactor.

It localises to the nucleus. Functionally, catalytic subunit of the SLX1-SLX4 structure-specific endonuclease that resolves DNA secondary structures generated during DNA repair and recombination. Has endonuclease activity towards branched DNA substrates, introducing single-strand cuts in duplex DNA close to junctions with ss-DNA. The protein is Structure-specific endonuclease subunit SLX1 of Vanderwaltozyma polyspora (strain ATCC 22028 / DSM 70294 / BCRC 21397 / CBS 2163 / NBRC 10782 / NRRL Y-8283 / UCD 57-17) (Kluyveromyces polysporus).